A 266-amino-acid chain; its full sequence is Glutamate racemase (266 aa).

Residues 9-10 (DS) and 41-42 (YG) contribute to the substrate site. Cys72 (proton donor/acceptor) is an active-site residue. Residue 73–74 (NT) participates in substrate binding. Cys184 (proton donor/acceptor) is an active-site residue. 185–186 (TH) is a binding site for substrate.

Belongs to the aspartate/glutamate racemases family.

It catalyses the reaction L-glutamate = D-glutamate. It functions in the pathway cell wall biogenesis; peptidoglycan biosynthesis. Functionally, provides the (R)-glutamate required for cell wall biosynthesis. This is Glutamate racemase from Staphylococcus aureus (strain Mu3 / ATCC 700698).